The sequence spans 686 residues: Polyribonucleotide nucleotidyltransferase (686 aa).

2 residues coordinate Mg(2+): Asp-478 and Asp-484. The 60-residue stretch at Pro-545–Ile-604 folds into the KH domain. The 71-residue stretch at Gly-614–Val-684 folds into the S1 motif domain.

It belongs to the polyribonucleotide nucleotidyltransferase family. Mg(2+) is required as a cofactor.

The protein localises to the cytoplasm. It carries out the reaction RNA(n+1) + phosphate = RNA(n) + a ribonucleoside 5'-diphosphate. Its function is as follows. Involved in mRNA degradation. Catalyzes the phosphorolysis of single-stranded polyribonucleotides processively in the 3'- to 5'-direction. The protein is Polyribonucleotide nucleotidyltransferase of Rubrobacter xylanophilus (strain DSM 9941 / JCM 11954 / NBRC 16129 / PRD-1).